We begin with the raw amino-acid sequence, 251 residues long: Vitamin B12 import ATP-binding protein BtuD (251 aa).

The ABC transporter domain maps to 2–236; it reads IRVNSLQVDS…EVLQSVFGTS (235 aa). 30-37 provides a ligand contact to ATP; it reads GPNGCGKS.

It belongs to the ABC transporter superfamily. Vitamin B12 importer (TC 3.A.1.13.1) family. In terms of assembly, the complex is composed of two ATP-binding proteins (BtuD), two transmembrane proteins (BtuC) and a solute-binding protein (BtuF).

The protein localises to the cell inner membrane. The catalysed reaction is an R-cob(III)alamin(out) + ATP + H2O = an R-cob(III)alamin(in) + ADP + phosphate + H(+). Its function is as follows. Part of the ABC transporter complex BtuCDF involved in vitamin B12 import. Responsible for energy coupling to the transport system. The chain is Vitamin B12 import ATP-binding protein BtuD from Vibrio cholerae serotype O1 (strain ATCC 39315 / El Tor Inaba N16961).